Reading from the N-terminus, the 357-residue chain is SrfA-induced gene J protein (357 aa).

Positions 1–29 (MGRVEDQIKDNYNSLSHEGERLNREAKIE) are disordered. Residues 5-51 (EDQIKDNYNSLSHEGERLNREAKIESEKLKNNAKLDAKDMKKDIDES) adopt a coiled-coil conformation. The span at 17–29 (HEGERLNREAKIE) shows a compositional bias: basic and acidic residues. 3 N-linked (GlcNAc...) asparagine glycosylation sites follow: Asn114, Asn157, and Asn172. 2 coiled-coil regions span residues 150–177 (KNFK…SNKI) and 223–270 (DETK…DAIE). Residues 290-307 (IWGSIGLIGGATATSYLF) traverse the membrane as a helical segment.

It is found in the membrane. This chain is SrfA-induced gene J protein (sigJ), found in Dictyostelium discoideum (Social amoeba).